Consider the following 640-residue polypeptide: Chaperone protein DnaK (640 aa).

At Thr-198 the chain carries Phosphothreonine; by autocatalysis. Residues 600 to 640 are disordered; sequence KTQGAGAEGSEQPHGEQEAGGAAKGETVVDADFEEVKDDKK. Positions 628 to 640 are enriched in acidic residues; the sequence is VDADFEEVKDDKK.

It belongs to the heat shock protein 70 family.

Functionally, acts as a chaperone. The protein is Chaperone protein DnaK of Geobacter sp. (strain M21).